The sequence spans 105 residues: Imizoquin biosynthesis cluster protein I (105 aa).

The segment covering Met1–Glu15 has biased composition (polar residues). A disordered region spans residues Met1 to Gly43.

It participates in secondary metabolite biosynthesis. Its function is as follows. Part of the gene cluster that mediates the biosynthesis of imizoquins A to D, tripeptide-derived alkaloids that serve a protective role against oxidative stress that are essential for normal germination. ImqB is a canonical three-module NRPS that assembles the tripeptide backbone of the imizoquins via condensation of Trp, Tyr, and Leu-derived precursors. N-methylation by imqF and phenol oxidation by imqC, followed by cyclization via the FAD-dependent oxidase imqH carry out the three-step transformation of L-tyrosine into tetrahydroisoquinoline. Importantly, this sequence requires the presence of a free amine in the tyrosine moiety, indicating that isoquinoline formation occurs prior to peptide bond formation. The imidazolidin-4-one ring of imizoquins could form following additional oxidation of the methyl-derived bridgehead carbon by imqH. Lastly, O-methylation by imqG and leucine hydroxylation by imqE complete biosynthesis of the imizoquins. This is Imizoquin biosynthesis cluster protein I from Aspergillus flavus (strain ATCC 200026 / FGSC A1120 / IAM 13836 / NRRL 3357 / JCM 12722 / SRRC 167).